Consider the following 188-residue polypeptide: ATP synthase subunit delta (188 aa).

It belongs to the ATPase delta chain family. As to quaternary structure, F-type ATPases have 2 components, F(1) - the catalytic core - and F(0) - the membrane proton channel. F(1) has five subunits: alpha(3), beta(3), gamma(1), delta(1), epsilon(1). F(0) has three main subunits: a(1), b(2) and c(10-14). The alpha and beta chains form an alternating ring which encloses part of the gamma chain. F(1) is attached to F(0) by a central stalk formed by the gamma and epsilon chains, while a peripheral stalk is formed by the delta and b chains.

Its subcellular location is the cell inner membrane. F(1)F(0) ATP synthase produces ATP from ADP in the presence of a proton or sodium gradient. F-type ATPases consist of two structural domains, F(1) containing the extramembraneous catalytic core and F(0) containing the membrane proton channel, linked together by a central stalk and a peripheral stalk. During catalysis, ATP synthesis in the catalytic domain of F(1) is coupled via a rotary mechanism of the central stalk subunits to proton translocation. Its function is as follows. This protein is part of the stalk that links CF(0) to CF(1). It either transmits conformational changes from CF(0) to CF(1) or is implicated in proton conduction. This Rhizobium johnstonii (strain DSM 114642 / LMG 32736 / 3841) (Rhizobium leguminosarum bv. viciae) protein is ATP synthase subunit delta.